The primary structure comprises 279 residues: Tryptophan synthase alpha chain (279 aa).

Active-site proton acceptor residues include E50 and D61.

This sequence belongs to the TrpA family. In terms of assembly, tetramer of two alpha and two beta chains.

It carries out the reaction (1S,2R)-1-C-(indol-3-yl)glycerol 3-phosphate + L-serine = D-glyceraldehyde 3-phosphate + L-tryptophan + H2O. It functions in the pathway amino-acid biosynthesis; L-tryptophan biosynthesis; L-tryptophan from chorismate: step 5/5. The alpha subunit is responsible for the aldol cleavage of indoleglycerol phosphate to indole and glyceraldehyde 3-phosphate. This chain is Tryptophan synthase alpha chain, found in Rhizobium meliloti (strain 1021) (Ensifer meliloti).